The following is a 182-amino-acid chain: Large ribosomal subunit protein uL5c (182 aa).

It belongs to the universal ribosomal protein uL5 family. Part of the 50S ribosomal subunit; contacts the 5S rRNA.

The protein localises to the plastid. Its subcellular location is the chloroplast. Binds 5S rRNA, forms part of the central protuberance of the 50S subunit. In Emiliania huxleyi (Coccolithophore), this protein is Large ribosomal subunit protein uL5c (rpl5).